The primary structure comprises 362 residues: Phosphoserine aminotransferase (362 aa).

Positions 9 and 42 each coordinate L-glutamate. Pyridoxal 5'-phosphate-binding positions include 76 to 77, Trp102, Thr153, Asp174, and Gln197; that span reads GR. Position 198 is an N6-(pyridoxal phosphate)lysine (Lys198). 239–240 provides a ligand contact to pyridoxal 5'-phosphate; it reads NT.

This sequence belongs to the class-V pyridoxal-phosphate-dependent aminotransferase family. SerC subfamily. As to quaternary structure, homodimer. Pyridoxal 5'-phosphate is required as a cofactor.

Its subcellular location is the cytoplasm. It catalyses the reaction O-phospho-L-serine + 2-oxoglutarate = 3-phosphooxypyruvate + L-glutamate. The catalysed reaction is 4-(phosphooxy)-L-threonine + 2-oxoglutarate = (R)-3-hydroxy-2-oxo-4-phosphooxybutanoate + L-glutamate. It functions in the pathway amino-acid biosynthesis; L-serine biosynthesis; L-serine from 3-phospho-D-glycerate: step 2/3. It participates in cofactor biosynthesis; pyridoxine 5'-phosphate biosynthesis; pyridoxine 5'-phosphate from D-erythrose 4-phosphate: step 3/5. Catalyzes the reversible conversion of 3-phosphohydroxypyruvate to phosphoserine and of 3-hydroxy-2-oxo-4-phosphonooxybutanoate to phosphohydroxythreonine. The protein is Phosphoserine aminotransferase of Escherichia coli O7:K1 (strain IAI39 / ExPEC).